The primary structure comprises 354 residues: MITIDGSMGEGGGQILRTALALSIITGKPFRIINIRARRSNPGLQPQHLASVMAAARISNAKVDGAYKGSLSLTFEPGDVKCGDYSIDIGTAGSISLVLQTLLPVLAVVNCGEVTLDITGGTDVPKAPPIDYVRFVLAHNLSLMGVGIKVELIRRGHYPRGGGKVKVTVKPAGRLKPINITELGELKGIWGLSHAVRLPSHVAVRQAKAAEDYLSKLGLKPSISLEYYEQGKDPHLGPGSGITLWAESTNGQRIGADSLGERGKPAEDVGREAAEALAAVINAGAAFDDHMGDMLIPFLALAEGRSEYTVVNLTSHLSTNISIVKLFLNANIETMNYNKKVKVTINPITAPRKP.

ATP-binding positions include Q100 and 290-293; that span reads HMGD. The Tele-AMP-histidine intermediate role is filled by H316.

It belongs to the RNA 3'-terminal cyclase family. Type 1 subfamily.

The protein resides in the cytoplasm. It catalyses the reaction a 3'-end 3'-phospho-ribonucleotide-RNA + ATP = a 3'-end 2',3'-cyclophospho-ribonucleotide-RNA + AMP + diphosphate. Functionally, catalyzes the conversion of 3'-phosphate to a 2',3'-cyclic phosphodiester at the end of RNA. The mechanism of action of the enzyme occurs in 3 steps: (A) adenylation of the enzyme by ATP; (B) transfer of adenylate to an RNA-N3'P to produce RNA-N3'PP5'A; (C) and attack of the adjacent 2'-hydroxyl on the 3'-phosphorus in the diester linkage to produce the cyclic end product. The biological role of this enzyme is unknown but it is likely to function in some aspects of cellular RNA processing. The chain is RNA 3'-terminal phosphate cyclase from Caldivirga maquilingensis (strain ATCC 700844 / DSM 13496 / JCM 10307 / IC-167).